A 158-amino-acid chain; its full sequence is Crossover junction endodeoxyribonuclease RuvC (158 aa).

Active-site residues include Asp7, Glu66, and Asp139. Asp7, Glu66, and Asp139 together coordinate Mg(2+).

The protein belongs to the RuvC family. As to quaternary structure, homodimer which binds Holliday junction (HJ) DNA. The HJ becomes 2-fold symmetrical on binding to RuvC with unstacked arms; it has a different conformation from HJ DNA in complex with RuvA. In the full resolvosome a probable DNA-RuvA(4)-RuvB(12)-RuvC(2) complex forms which resolves the HJ. Mg(2+) serves as cofactor.

It localises to the cytoplasm. It catalyses the reaction Endonucleolytic cleavage at a junction such as a reciprocal single-stranded crossover between two homologous DNA duplexes (Holliday junction).. The RuvA-RuvB-RuvC complex processes Holliday junction (HJ) DNA during genetic recombination and DNA repair. Endonuclease that resolves HJ intermediates. Cleaves cruciform DNA by making single-stranded nicks across the HJ at symmetrical positions within the homologous arms, yielding a 5'-phosphate and a 3'-hydroxyl group; requires a central core of homology in the junction. The consensus cleavage sequence is 5'-(A/T)TT(C/G)-3'. Cleavage occurs on the 3'-side of the TT dinucleotide at the point of strand exchange. HJ branch migration catalyzed by RuvA-RuvB allows RuvC to scan DNA until it finds its consensus sequence, where it cleaves and resolves the cruciform DNA. The protein is Crossover junction endodeoxyribonuclease RuvC of Campylobacter lari (strain RM2100 / D67 / ATCC BAA-1060).